The following is a 1415-amino-acid chain: DNA-directed RNA polymerase subunit beta'' (1415 aa).

Residues Cys217, Cys291, Cys298, and Cys301 each coordinate Zn(2+).

This sequence belongs to the RNA polymerase beta' chain family. RpoC2 subfamily. In plastids the minimal PEP RNA polymerase catalytic core is composed of four subunits: alpha, beta, beta', and beta''. When a (nuclear-encoded) sigma factor is associated with the core the holoenzyme is formed, which can initiate transcription. Zn(2+) is required as a cofactor.

It is found in the plastid. It localises to the chloroplast. The catalysed reaction is RNA(n) + a ribonucleoside 5'-triphosphate = RNA(n+1) + diphosphate. Its function is as follows. DNA-dependent RNA polymerase catalyzes the transcription of DNA into RNA using the four ribonucleoside triphosphates as substrates. The sequence is that of DNA-directed RNA polymerase subunit beta'' from Phaeodactylum tricornutum (strain CCAP 1055/1).